Here is a 236-residue protein sequence, read N- to C-terminus: Transcriptional regulatory protein RprY (236 aa).

The Response regulatory domain occupies 9-123; sequence RILLCEDDEN…ELTFRIEAIL (115 aa). D58 bears the 4-aspartylphosphate mark. Residues 134 to 231 constitute a DNA-binding region (ompR/PhoB-type); it reads SNVYKIGKFT…IHGKGYKLIT (98 aa).

Phosphorylated by RprX.

It is found in the cytoplasm. In terms of biological role, member of the two-component regulatory system RprX/RprY. The protein is Transcriptional regulatory protein RprY (rprY) of Bacteroides fragilis (strain YCH46).